The primary structure comprises 205 residues: Holliday junction branch migration complex subunit RuvA (205 aa).

A domain I region spans residues 1–64 (MIGKLKGILE…EEAIRLFGFV (64 aa)). Residues 65–143 (AKAEQEWFCL…PFNDNALHFT (79 aa)) form a domain II region. A flexible linker region spans residues 144-149 (PQPHLE). Positions 150–205 (VTHQPTNDALSALVKLGFERDQAARALALAMNALEGETVSSALLIRHSLKLLSPST) are domain III.

This sequence belongs to the RuvA family. As to quaternary structure, homotetramer. Forms an RuvA(8)-RuvB(12)-Holliday junction (HJ) complex. HJ DNA is sandwiched between 2 RuvA tetramers; dsDNA enters through RuvA and exits via RuvB. An RuvB hexamer assembles on each DNA strand where it exits the tetramer. Each RuvB hexamer is contacted by two RuvA subunits (via domain III) on 2 adjacent RuvB subunits; this complex drives branch migration. In the full resolvosome a probable DNA-RuvA(4)-RuvB(12)-RuvC(2) complex forms which resolves the HJ.

The protein localises to the cytoplasm. In terms of biological role, the RuvA-RuvB-RuvC complex processes Holliday junction (HJ) DNA during genetic recombination and DNA repair, while the RuvA-RuvB complex plays an important role in the rescue of blocked DNA replication forks via replication fork reversal (RFR). RuvA specifically binds to HJ cruciform DNA, conferring on it an open structure. The RuvB hexamer acts as an ATP-dependent pump, pulling dsDNA into and through the RuvAB complex. HJ branch migration allows RuvC to scan DNA until it finds its consensus sequence, where it cleaves and resolves the cruciform DNA. This Bartonella quintana (strain Toulouse) (Rochalimaea quintana) protein is Holliday junction branch migration complex subunit RuvA.